Reading from the N-terminus, the 227-residue chain is Probable 2-phosphosulfolactate phosphatase (227 aa).

The protein belongs to the ComB family. The cofactor is Mg(2+).

It carries out the reaction (2R)-O-phospho-3-sulfolactate + H2O = (2R)-3-sulfolactate + phosphate. In Thermotoga petrophila (strain ATCC BAA-488 / DSM 13995 / JCM 10881 / RKU-1), this protein is Probable 2-phosphosulfolactate phosphatase.